We begin with the raw amino-acid sequence, 530 residues long: PC4 and SFRS1-interacting protein (530 aa).

The region spanning 1-64 is the PWWP domain; sequence MTRDFKPGDL…PKDIFPYSEN (64 aa). Lysine 75 participates in a covalent cross-link: Glycyl lysine isopeptide (Lys-Gly) (interchain with G-Cter in SUMO2). Residues 86 to 349 are disordered; the sequence is NNPKVKFSSQ…VEKKRETSMD (264 aa). Positions 92–104 are enriched in polar residues; the sequence is FSSQQASTKQSNA. A phosphoserine mark is found at serine 102, serine 105, and serine 106. Residues 113–135 show a composition bias toward basic and acidic residues; sequence KETSVSKEDTDHEEKASNEDVTK. Threonine 115 and threonine 122 each carry phosphothreonine. Serine 129 carries the phosphoserine modification. The residue at position 141 (threonine 141) is a Phosphothreonine. The span at 144 to 153 shows a compositional bias: basic residues; it reads AARRGRKRKA. The short motif at 146 to 156 is the Nuclear localization signal element; it reads RRGRKRKAEKQ. Threonine 167 carries the phosphothreonine modification. Phosphoserine occurs at positions 177 and 206. Residues 213-261 show a composition bias toward basic and acidic residues; the sequence is EEDKSKKKGQEEKQPKKQLKKDEEGQKEEDKPRKEPDKKEGKKEVESKR. The residue at position 271 (serine 271) is a Phosphoserine. The residue at position 272 (threonine 272) is a Phosphothreonine. Serine 273 and serine 275 each carry phosphoserine. The segment covering 274 to 283 has biased composition (acidic residues); that stretch reads DSEEEGDDQE. The segment covering 287-302 has biased composition (basic residues); the sequence is KRKGGRNFQTAHRRNM. Residues 305-349 are compositionally biased toward basic and acidic residues; that stretch reads GQHEKEAADRKRKQEEQMETEQQNKDEGKKPEVKKVEKKRETSMD. 2 coiled-coil regions span residues 306–334 and 371–395; these read QHEK…EGKK and NRCI…KHTE. The tract at residues 340 to 417 is integrase-binding domain (IBD); sequence VEKKRETSMD…VSQIIMEKST (78 aa). Serine 434 carries the phosphoserine modification. A Phosphothreonine modification is found at threonine 437. At serine 443 the chain carries Phosphoserine. The span at 446–473 shows a compositional bias: basic and acidic residues; the sequence is EQRQHEEANKTKDQGKKGPNKKLDKEQT. The segment at 446–530 is disordered; sequence EQRQHEEANK…ISLKDSTLDN (85 aa). Residues 474-494 are compositionally biased toward polar residues; sequence GSKTLNGGSDAPDSNQAQHNG. The span at 498 to 530 shows a compositional bias: basic and acidic residues; sequence EESKDKHEASSKKKPSNEERETEISLKDSTLDN. Arginine 517 carries the citrulline modification. At serine 522 the chain carries Phosphoserine. At threonine 527 the chain carries Phosphothreonine.

The protein belongs to the HDGF family. In terms of assembly, monomer. Interacts with IFRD1/PC4. Interacts (via IBD domain) with POGZ (via IBM motif) and CDCA7L (via IBM motifs). Interacts (via IBD domain) with KMT2A (via IBM motifs) with a moderate affinity whereas interacts with the KMT2A-MEN1 complex with a greater affinity; MEN1 enhances interaction of KMT2A with PSIP1. Interacts (via IBD domain) with IWS1 (via IBM motif), MED1 (via IBM motif) and DBF4 (via IBM motifs). (Microbial infection) Interacts (via IBD domain) with feline immunodeficiency virus (FIV) integrase (IN), determining its nuclear localization, its tight association with chromatin and its protection from the proteasome. In terms of processing, citrullinated by PADI4.

Its subcellular location is the nucleus. Its function is as follows. Transcriptional coactivator involved in neuroepithelial stem cell differentiation and neurogenesis. Involved in particular in lens epithelial cell gene regulation and stress responses. May play an important role in lens epithelial to fiber cell terminal differentiation. May play a protective role during stress-induced apoptosis. The protein is PC4 and SFRS1-interacting protein (PSIP1) of Felis catus (Cat).